Reading from the N-terminus, the 76-residue chain is Small ribosomal subunit protein bS18 (76 aa).

The protein belongs to the bacterial ribosomal protein bS18 family. Part of the 30S ribosomal subunit. Forms a tight heterodimer with protein bS6.

Its function is as follows. Binds as a heterodimer with protein bS6 to the central domain of the 16S rRNA, where it helps stabilize the platform of the 30S subunit. This is Small ribosomal subunit protein bS18 from Xanthomonas campestris pv. campestris (strain 8004).